Here is a 150-residue protein sequence, read N- to C-terminus: Siroheme decarboxylase NirD subunit (150 aa).

The protein belongs to the Ahb/Nir family. In terms of assembly, probably forms a complex composed of NirD, NirL, NirG and NirH. All proteins are required for the total conversion of siroheme to didecarboxysiroheme.

The enzyme catalyses siroheme + 2 H(+) = 12,18-didecarboxysiroheme + 2 CO2. The protein operates within porphyrin-containing compound metabolism. In terms of biological role, involved in heme d1 biosynthesis. Catalyzes the decarboxylation of siroheme into didecarboxysiroheme. The chain is Siroheme decarboxylase NirD subunit from Pseudomonas aeruginosa (strain ATCC 15692 / DSM 22644 / CIP 104116 / JCM 14847 / LMG 12228 / 1C / PRS 101 / PAO1).